The following is a 925-amino-acid chain: Aspulvinone E synthetase melA (925 aa).

Residues 11 to 434 are adenylation (A) domain; it reads ETAAARNGDG…GGRAKETIII (424 aa). The 81-residue stretch at 564–644 folds into the Carrier domain; it reads SPKNDFEKGL…ELAAALDNLY (81 aa). An O-(pantetheine 4'-phosphoryl)serine modification is found at Ser-601. A thioesterase (TE) domain region spans residues 663 to 923; sequence PLWLVHPGAG…KILRSALAER (261 aa).

It belongs to the ATP-dependent AMP-binding enzyme family.

The protein localises to the cytoplasm. In terms of biological role, nonribosomal peptide synthase; part of the gene cluster that mediates the biosynthesis of Asp-melanin, a pigment that confers resistance against UV light and hampers phagocytosis by soil amoeba. The nonribosomal peptide synthase melA converts 4-hydroxyphenylpyruvate (4-HPPA) to aspulvinone E. The tyrosinase tyrP then performs hydroxylations of both aromatic moieties of aspulvinone E. The product of tyrP is highly unstable, and, due to the high reactivity of methides and ortho-diquinones, the polymeric Asp-melanin forms spontaneously. This chain is Aspulvinone E synthetase melA, found in Aspergillus terreus.